The chain runs to 424 residues: CUGBP Elav-like family member 4 (424 aa).

The tract at residues 8–27 (VANGQPDNSSLSSNPTGHMN) is disordered. Residues 9–24 (ANGQPDNSSLSSNPTG) show a composition bias toward polar residues. 2 consecutive RRM domains span residues 47–128 (IKLF…PADS) and 342–417 (PQPP…LKRP).

It belongs to the CELF/BRUNOL family.

It localises to the nucleus. Its subcellular location is the cytoplasm. RNA-binding protein that may be implicated in the regulation of pre-mRNA alternative splicing. This Xenopus tropicalis (Western clawed frog) protein is CUGBP Elav-like family member 4 (celf4).